Here is a 163-residue protein sequence, read N- to C-terminus: Nucleotide-binding protein PC1_1036 (163 aa).

Belongs to the YajQ family.

Its function is as follows. Nucleotide-binding protein. This is Nucleotide-binding protein PC1_1036 from Pectobacterium carotovorum subsp. carotovorum (strain PC1).